The sequence spans 153 residues: Ribosomal RNA large subunit methyltransferase H (153 aa).

S-adenosyl-L-methionine is bound by residues Leu71 and Gly102.

It belongs to the RNA methyltransferase RlmH family. In terms of assembly, homodimer.

It localises to the cytoplasm. It carries out the reaction pseudouridine(1915) in 23S rRNA + S-adenosyl-L-methionine = N(3)-methylpseudouridine(1915) in 23S rRNA + S-adenosyl-L-homocysteine + H(+). Specifically methylates the pseudouridine at position 1915 (m3Psi1915) in 23S rRNA. The polypeptide is Ribosomal RNA large subunit methyltransferase H (Anaeromyxobacter sp. (strain K)).